A 157-amino-acid chain; its full sequence is uncharacterized protein (157 aa).

Residues 9–146 (LLINYKTLDE…GDFYVWHPET (138 aa)) enclose the N-acetyltransferase domain.

This is an uncharacterized protein from Bacillus cereus (strain ZK / E33L).